We begin with the raw amino-acid sequence, 422 residues long: Phosphoribosylamine--glycine ligase (422 aa).

Residues 107–312 (KEVMAAAGVR…LGQLLYAAGT (206 aa)) enclose the ATP-grasp domain. 138 to 193 (PPVGDLSWVVKDDRLAAGKGVVVTSDRDVARTHAAGLLEAGHPVLLESYLDGPEVS) is a binding site for ATP. Mg(2+)-binding residues include E282 and N284.

It belongs to the GARS family. Mg(2+) serves as cofactor. The cofactor is Mn(2+).

The catalysed reaction is 5-phospho-beta-D-ribosylamine + glycine + ATP = N(1)-(5-phospho-beta-D-ribosyl)glycinamide + ADP + phosphate + H(+). Its pathway is purine metabolism; IMP biosynthesis via de novo pathway; N(1)-(5-phospho-D-ribosyl)glycinamide from 5-phospho-alpha-D-ribose 1-diphosphate: step 2/2. This chain is Phosphoribosylamine--glycine ligase, found in Mycobacterium leprae (strain TN).